The sequence spans 272 residues: tRNA pseudouridine synthase B (272 aa).

The active-site Nucleophile is D38.

The protein belongs to the pseudouridine synthase TruB family. Type 1 subfamily.

The catalysed reaction is uridine(55) in tRNA = pseudouridine(55) in tRNA. Functionally, responsible for synthesis of pseudouridine from uracil-55 in the psi GC loop of transfer RNAs. The sequence is that of tRNA pseudouridine synthase B from Campylobacter jejuni (strain RM1221).